Reading from the N-terminus, the 180-residue chain is MANRLKEKYTNEVIPALTEKFNYTSVMAVPKVEKIVLNMGVGDAVSNAKNLEKAAAELALISGQKPLITKAKKSIAGFRLREGVAIGAKVTLRGERMYEFLDKLVSVSLPRVRDFHGVPTKSFDGRGNYTLGVKEQLIFPEISFDDVDKVRGLDIVIVTTANTDEESRELLKGLGMPFAK.

The protein belongs to the universal ribosomal protein uL5 family. In terms of assembly, part of the 50S ribosomal subunit; part of the 5S rRNA/L5/L18/L25 subcomplex. Contacts the 5S rRNA and the P site tRNA. Forms a bridge to the 30S subunit in the 70S ribosome.

This is one of the proteins that bind and probably mediate the attachment of the 5S RNA into the large ribosomal subunit, where it forms part of the central protuberance. In the 70S ribosome it contacts protein S13 of the 30S subunit (bridge B1b), connecting the 2 subunits; this bridge is implicated in subunit movement. Contacts the P site tRNA; the 5S rRNA and some of its associated proteins might help stabilize positioning of ribosome-bound tRNAs. The sequence is that of Large ribosomal subunit protein uL5 from Streptococcus pyogenes serotype M1.